Here is a 21-residue protein sequence, read N- to C-terminus: Glucose-1-phosphate adenylyltransferase large subunit (21 aa).

Residues 1-21 (SVTADNASETKVREIGQEKSS) are disordered. Positions 8-21 (SETKVREIGQEKSS) are enriched in basic and acidic residues.

It belongs to the bacterial/plant glucose-1-phosphate adenylyltransferase family. In terms of assembly, heterotetramer.

It is found in the plastid. It localises to the chloroplast. Its subcellular location is the amyloplast. It carries out the reaction alpha-D-glucose 1-phosphate + ATP + H(+) = ADP-alpha-D-glucose + diphosphate. The protein operates within glycan biosynthesis; starch biosynthesis. With respect to regulation, activated by 3'phosphoglycerate, inhibited by orthophosphate. Allosteric regulation. Functionally, this protein plays a role in synthesis of starch. It catalyzes the synthesis of the activated glycosyl donor, ADP-glucose from Glc-1-P and ATP. The protein is Glucose-1-phosphate adenylyltransferase large subunit of Spinacia oleracea (Spinach).